The primary structure comprises 167 residues: MIIYTDIISGDELLSDAYDLKLVDGVIYEADCDMVKVGGDNIDIGANPSAEDGGDDVEDGTELVNNVVHSFRLQQTAFDKKSFLTYIKGYMKEIKGRLQESNPDEVSVFEKGAQAYVKKVIGSFKDWEFFTGESMDPDGMLVLLNYREDGTTPFVAIWKHGVKAEKI.

In terms of domain architecture, TCTP spans 1–167 (MIIYTDIISG…WKHGVKAEKI (167 aa)).

Belongs to the TCTP family.

Its subcellular location is the cytoplasm. The protein localises to the cytoskeleton. Functionally, involved in protein synthesis. Involved in microtubule stabilization. The sequence is that of Translationally-controlled tumor protein homolog from Kluyveromyces lactis (strain ATCC 8585 / CBS 2359 / DSM 70799 / NBRC 1267 / NRRL Y-1140 / WM37) (Yeast).